We begin with the raw amino-acid sequence, 515 residues long: Monocarboxylate transporter 10 (515 aa).

The interval 1 to 48 (MVLSQEEPDSARGTSEAQPLGPAPTGAAPPPGPGPSDSPEAAVEKVEV) is disordered. The Cytoplasmic segment spans residues 1–66 (MVLSQEEPDS…EPHEPPEPPE (66 aa)). Positions 17 to 26 (AQPLGPAPTG) are enriched in low complexity. Positions 27 to 36 (AAPPPGPGPS) are enriched in pro residues. The chain crosses the membrane as a helical span at residues 67–87 (GGWGWLVMLAAMWCNGSVFGI). The Extracellular portion of the chain corresponds to 88–114 (QNACGVLFVSMLETFGSKDDDKMVFKT). Residues 115–135 (AWVGSLSMGMIFFCCPIVSVF) form a helical membrane-spanning segment. Residues 136–144 (TDLFGCRKT) lie on the Cytoplasmic side of the membrane. A helical membrane pass occupies residues 145 to 165 (AVVGAAVGFVGLMSSSFVSSI). Residues 166–171 (EPLYLT) lie on the Extracellular side of the membrane. Residues 172-192 (YGIIFACGCSFAYQPSLVILG) traverse the membrane as a helical segment. Over 193 to 200 (HYFKKRLG) the chain is Cytoplasmic. Residues 201–221 (LVNGIVTAGSSVFTILLPLLL) form a helical membrane-spanning segment. Residues 222–228 (RVLIDSV) are Extracellular-facing. The chain crosses the membrane as a helical span at residues 229–249 (GLFYTLRVLCIFMFVLFLAGF). Over 250 to 291 (TYRPLATSTKDKESGGSGSSLFSRKKFSPPKKIFNFAIFKVT) the chain is Cytoplasmic. The residue at position 263 (Ser263) is a Phosphoserine. A helical transmembrane segment spans residues 292-312 (AYAVWAVGIPLALFGYFVPYV). Residues 313 to 329 (HLMKHVNERFQDEKNKE) lie on the Extracellular side of the membrane. The chain crosses the membrane as a helical span at residues 330–350 (VVLMCIGVTSGVGRLLFGRIA). Asp351 is a topological domain (cytoplasmic). Residues 352 to 372 (YVPGVKKVYLQVLSFFFIGLM) form a helical membrane-spanning segment. The Extracellular portion of the chain corresponds to 373 to 396 (SMMIPLCSIFGALIAVCLIMGLFD). Residues 397 to 417 (GCFISIMAPIAFELVGAQDVS) traverse the membrane as a helical segment. Topologically, residues 418-419 (QA) are cytoplasmic. The helical transmembrane segment at 420–440 (IGFLLGFMSIPMTVGPPIAGL) threads the bilayer. Topologically, residues 441 to 451 (LRDKLGSYDVA) are extracellular. A helical transmembrane segment spans residues 452 to 472 (FYLAGVPPLIGGAVLCFIPWI). Residues 473-515 (HSKKQREISKTTGKEKMEKMLENQNSLLSSSSGMFKKESDSII) are Cytoplasmic-facing. Phosphoserine is present on residues Ser498, Ser501, Ser503, and Ser504.

The protein belongs to the major facilitator superfamily. Monocarboxylate porter (TC 2.A.1.13) family. In terms of processing, not N-glycosylated. As to expression, strongly expressed in kidney and skeletal muscle and at lower level in placenta and heart.

It localises to the cell membrane. The protein resides in the basolateral cell membrane. It carries out the reaction 3,3',5-triiodo-L-thyronine(out) = 3,3',5-triiodo-L-thyronine(in). The enzyme catalyses L-thyroxine(out) = L-thyroxine(in). It catalyses the reaction L-tryptophan(in) = L-tryptophan(out). The catalysed reaction is L-tyrosine(in) = L-tyrosine(out). It carries out the reaction L-phenylalanine(in) = L-phenylalanine(out). Sodium- and proton-independent thyroid hormones and aromatic acids transporter. Mediates both uptake and efflux of 3,5,3'-triiodothyronine (T3) and 3,5,3',5'-tetraiodothyronine (T4) with high affinity, suggesting a role in the homeostasis of thyroid hormone levels. Responsible for low affinity bidirectional transport of the aromatic amino acids, such as phenylalanine, tyrosine, tryptophan and L-3,4-dihydroxyphenylalanine (L-dopa). Plays an important role in homeostasis of aromatic amino acids. In Homo sapiens (Human), this protein is Monocarboxylate transporter 10 (SLC16A10).